The chain runs to 297 residues: Nitrogenase iron protein 2 (297 aa).

14–21 is a binding site for ATP; that stretch reads GKGGIGKS. Cys102 contributes to the [4Fe-4S] cluster binding site. ADP-ribosylarginine; by dinitrogenase reductase ADP-ribosyltransferase is present on Arg105. Residue Cys136 participates in [4Fe-4S] cluster binding.

Belongs to the NifH/BchL/ChlL family. In terms of assembly, homodimer. [4Fe-4S] cluster is required as a cofactor. The reversible ADP-ribosylation of Arg-105 inactivates the nitrogenase reductase and regulates nitrogenase activity.

The enzyme catalyses N2 + 8 reduced [2Fe-2S]-[ferredoxin] + 16 ATP + 16 H2O = H2 + 8 oxidized [2Fe-2S]-[ferredoxin] + 2 NH4(+) + 16 ADP + 16 phosphate + 6 H(+). Functionally, the key enzymatic reactions in nitrogen fixation are catalyzed by the nitrogenase complex, which has 2 components: the iron protein and the molybdenum-iron protein. This Nostoc sp. (strain PCC 7120 / SAG 25.82 / UTEX 2576) protein is Nitrogenase iron protein 2 (nifH2).